Here is a 459-residue protein sequence, read N- to C-terminus: Methionine aminopeptidase 2-2 (459 aa).

Residues 1-12 (MGSKSPEDHRQG) are compositionally biased toward basic and acidic residues. Positions 1 to 87 (MGSKSPEDHR…KKLSVVQQTS (87 aa)) are disordered. Acidic residues predominate over residues 43-54 (GQDEDGDDDDDE). Residues 55–66 (KTGIDLKTNDGA) show a composition bias toward basic and acidic residues. Basic residues predominate over residues 67-79 (KKKRKRNKKKSKK). A substrate-binding site is contributed by His210. The a divalent metal cation site is built by Asp231, Asp242, and His311. His319 lines the substrate pocket. A divalent metal cation is bound by residues Glu344 and Glu440.

It belongs to the peptidase M24A family. Methionine aminopeptidase eukaryotic type 2 subfamily. Requires Co(2+) as cofactor. It depends on Zn(2+) as a cofactor. Mn(2+) is required as a cofactor. Fe(2+) serves as cofactor.

It is found in the cytoplasm. The catalysed reaction is Release of N-terminal amino acids, preferentially methionine, from peptides and arylamides.. Cotranslationally removes the N-terminal methionine from nascent proteins. The N-terminal methionine is often cleaved when the second residue in the primary sequence is small and uncharged (Met-Ala-, Cys, Gly, Pro, Ser, Thr, or Val). In Pyrenophora teres f. teres (strain 0-1) (Barley net blotch fungus), this protein is Methionine aminopeptidase 2-2.